A 591-amino-acid polypeptide reads, in one-letter code: Aspartate--tRNA ligase (591 aa).

Glu172 contacts L-aspartate. The tract at residues 196–199 (QLFK) is aspartate. Arg218 contributes to the L-aspartate binding site. Residues 218–220 (RDE) and Gln227 contribute to the ATP site. His449 serves as a coordination point for L-aspartate. Position 483 (Glu483) interacts with ATP. Arg490 is an L-aspartate binding site. Position 535-538 (535-538 (GLDR)) interacts with ATP.

The protein belongs to the class-II aminoacyl-tRNA synthetase family. Type 1 subfamily. Homodimer.

It localises to the cytoplasm. The enzyme catalyses tRNA(Asp) + L-aspartate + ATP = L-aspartyl-tRNA(Asp) + AMP + diphosphate. Functionally, catalyzes the attachment of L-aspartate to tRNA(Asp) in a two-step reaction: L-aspartate is first activated by ATP to form Asp-AMP and then transferred to the acceptor end of tRNA(Asp). The protein is Aspartate--tRNA ligase of Actinobacillus pleuropneumoniae serotype 5b (strain L20).